We begin with the raw amino-acid sequence, 249 residues long: Small ribosomal subunit protein eS6 (249 aa).

K14 participates in a covalent cross-link: Glycyl lysine isopeptide (Lys-Gly) (interchain with G-Cter in SUMO2). The residue at position 35 (E35) is an ADP-ribosyl glutamic acid. A (3R)-3-hydroxyarginine modification is found at R137. The residue at position 148 (S148) is a Phosphoserine. K211 carries the post-translational modification N6-acetyllysine. Over residues 217-229 the composition is skewed to basic and acidic residues; sequence MKEAKEKRQEQIA. The interval 217 to 249 is disordered; sequence MKEAKEKRQEQIAKRRRLSSLRASTSKSESSQK. Phosphoserine occurs at positions 235, 236, 240, 242, 244, and 247. The segment covering 236 to 249 has biased composition (low complexity); the sequence is SLRASTSKSESSQK.

This sequence belongs to the eukaryotic ribosomal protein eS6 family. Component of the small ribosomal subunit. Part of the small subunit (SSU) processome, composed of more than 70 proteins and the RNA chaperone small nucleolar RNA (snoRNA) U3. Post-translationally, ribosomal protein S6 is the major substrate of protein kinases in eukaryote ribosomes. The phosphorylation is stimulated by growth factors, tumor promoting agents, and mitogens. It is dephosphorylated at growth arrest. Phosphorylated at Ser-235 and Ser-236 by RPS6KA1 and RPS6KA3; phosphorylation at these sites facilitates the assembly of the pre-initiation complex. In terms of processing, specifically hydroxylated (with R stereochemistry) at C-3 of Arg-137 by KDM8. Mono-ADP-ribosylation at Glu-35 by PARP16 inhibits polysome assembly and mRNA loading, thereby inhibiting protein translation.

It is found in the cytoplasm. The protein resides in the nucleus. It localises to the nucleolus. Component of the 40S small ribosomal subunit. Plays an important role in controlling cell growth and proliferation through the selective translation of particular classes of mRNA. Part of the small subunit (SSU) processome, first precursor of the small eukaryotic ribosomal subunit. During the assembly of the SSU processome in the nucleolus, many ribosome biogenesis factors, an RNA chaperone and ribosomal proteins associate with the nascent pre-rRNA and work in concert to generate RNA folding, modifications, rearrangements and cleavage as well as targeted degradation of pre-ribosomal RNA by the RNA exosome. The polypeptide is Small ribosomal subunit protein eS6 (RPS6) (Oryctolagus cuniculus (Rabbit)).